Consider the following 357-residue polypeptide: MTIFTRDFSHRILACVLLPLFLFQCLPYVTCQQGSESAGRNGKSKESSIIGIVLLSLFLLLLVVYCLNYGCCIEENETGGHEVLHSRVRRGIDKDVIESFPAFLYSEVKAFKIGNGGVECAICLCEFEDEEPLRWMPPCSHTFHANCIDEWLSSRSTCPVCRANLSLKSGDSFPHPSMDVETGNAQRGVQESPDERSLTGSSVTCNNNANYTTPRSRSTGLLSSWHVPELFLPRSHSTGHSLVQPCQNIDRFTLQLPEEVQRQLVSLNLIKRSHIALPRARSSRQGYRSGSVGNERTGFSQGRQTLRRAISTSLSFSFQPAPVRSTLDRDNLMRETSQANDKDFGERSFQRLMPEKN.

An N-terminal signal peptide occupies residues 1-31; that stretch reads MTIFTRDFSHRILACVLLPLFLFQCLPYVTC. The chain crosses the membrane as a helical span at residues 47–67; the sequence is SSIIGIVLLSLFLLLLVVYCL. The RING-type; atypical zinc finger occupies 120–162; it reads CAICLCEFEDEEPLRWMPPCSHTFHANCIDEWLSSRSTCPVCR. The segment at 172–210 is disordered; the sequence is SFPHPSMDVETGNAQRGVQESPDERSLTGSSVTCNNNAN. Positions 198 to 210 are enriched in polar residues; it reads LTGSSVTCNNNAN. Ser-273 bears the Phosphoserine mark. Disordered regions lie at residues 281 to 304 and 327 to 357; these read RSSR…QGRQ and LDRD…PEKN. A compositionally biased stretch (polar residues) spans 283–304; the sequence is SRQGYRSGSVGNERTGFSQGRQ. The segment covering 340–357 has biased composition (basic and acidic residues); that stretch reads NDKDFGERSFQRLMPEKN.

Belongs to the RING-type zinc finger family. ATL subfamily.

The protein resides in the membrane. The catalysed reaction is S-ubiquitinyl-[E2 ubiquitin-conjugating enzyme]-L-cysteine + [acceptor protein]-L-lysine = [E2 ubiquitin-conjugating enzyme]-L-cysteine + N(6)-ubiquitinyl-[acceptor protein]-L-lysine.. It functions in the pathway protein modification; protein ubiquitination. The polypeptide is Putative RING-H2 finger protein ATL37 (ATL37) (Arabidopsis thaliana (Mouse-ear cress)).